The chain runs to 213 residues: MITIVLLILAYLLGSIPSGLWIGQVFFQINLREHGSGNTGTTNTFRILGKKAGMATFVIDFFKGTLATLLPIIFHLQGVSPLIFGLLAVIGHTFPIFAGFKGGKAVATSAGVIFGFAPIFCLYLAIIFFGALYLGSMISLSSVTASIAAVIGVLLFPLFGFILSNYDSLFIAIILALASLIIIRHKDNIARIKNKTENLVPWGLNLTHQDPKK.

Transmembrane regions (helical) follow at residues 2-22 (ITIV…GLWI), 52-74 (AGMA…PIIF), 81-100 (PLIF…FAGF), 112-132 (VIFG…FGAL), 143-163 (VTAS…GFIL), and 164-184 (SNYD…IIIR).

It belongs to the PlsY family. In terms of assembly, probably interacts with PlsX.

It is found in the cell membrane. The catalysed reaction is an acyl phosphate + sn-glycerol 3-phosphate = a 1-acyl-sn-glycero-3-phosphate + phosphate. It functions in the pathway lipid metabolism; phospholipid metabolism. Its function is as follows. Catalyzes the transfer of an acyl group from acyl-phosphate (acyl-PO(4)) to glycerol-3-phosphate (G3P) to form lysophosphatidic acid (LPA). This enzyme utilizes acyl-phosphate as fatty acyl donor, but not acyl-CoA or acyl-ACP. This chain is Glycerol-3-phosphate acyltransferase, found in Streptococcus pneumoniae (strain ATCC 700669 / Spain 23F-1).